A 161-amino-acid polypeptide reads, in one-letter code: Extracellular giant hemoglobin major globin subunit B1 (161 aa).

Residues 1 to 16 (MTILVLFLSCAALASA) form the signal peptide. In terms of domain architecture, Globin spans 18 to 161 (CCSRGDAEVV…YIAAGIGAGL (144 aa)). Residues cysteine 19 and cysteine 149 are joined by a disulfide bond. Heme b is bound at residue histidine 112.

Belongs to the globin family. As to quaternary structure, the 400 kDa hemoglobin consists of a spherical 24-mer arranged as a double layer of dome-shaped dodecamers. Each dodecamer is composed of the 3-fold trimer of the tetramer A1-A2-B1-B2 having one intra-tetramer (A1-B2) disulfide bond and one inter-tetramer (B1-B2) disulfide bond per tetramer.

The protein localises to the secreted. Functionally, the extracellular giant hemoglobin is able to bind and transport oxygen and sulfide simultaneously and reversibly at two different sites. The chain is Extracellular giant hemoglobin major globin subunit B1 (ghbB1) from Oligobrachia mashikoi (Beard worm).